The following is a 1045-amino-acid chain: Unconventional myosin-Ia (1045 aa).

Residues 11-697 (AAVGDLVMLD…TLFDLEKRRQ (687 aa)) enclose the Myosin motor domain. Residue 104–111 (GESGAGKT) coordinates ATP. An actin-binding region spans residues 574-596 (VATLMKNLYSKNPNYIRCIKPND). IQ domains are found at residues 701–727 (AELA…RKSQ), 723–750 (MRKS…KRSV), and 746–774 (MKRS…RSDA). Positions 861-1044 (KALYAQSLQQ…RGSHKMEILV (184 aa)) constitute a TH1 domain.

It belongs to the TRAFAC class myosin-kinesin ATPase superfamily. Myosin family. In terms of tissue distribution, intestine.

In terms of biological role, could play an important role in morphogenesis and function of intestinal microvilli. The polypeptide is Unconventional myosin-Ia (MYO1A) (Gallus gallus (Chicken)).